Consider the following 71-residue polypeptide: Probable ribosome maturation protein RlbA (71 aa).

One can recognise an S4 RNA-binding domain in the interval 12-69; it reads ITLGQFLKLADVIQSGGMAKWFLSEHEVLVNDEPDNRRGRKLYVGDVVEIEGFGSFQV.

In terms of biological role, may assist in the assembly of the 50S subunit. This Bacillus subtilis (strain 168) protein is Probable ribosome maturation protein RlbA.